An 891-amino-acid chain; its full sequence is MMPIKSIVTLDQLEDSEYLFRIVSTVLPHLCLDYKVCDQLKTTFVHPFDVFLNNSLGSVTKQDELQATISKLGINYLIDTTSRELKLFNVTLNAGNIDIINHPINISSETNPIINTHSFYDLPPFTQHLLNIRLTDTEYRARFIGGYIKPDGSDSMDVLAEKKYPDLNFDNTYLFNILYKDVINAPIKEFKAKIVNGVLSRQDFDNLIGVRQYITAQDQPRFDITYNIADAARHYGVNLNTLPLPNVDLTTMPTYKHLIMYEQYFVDDYDRVPIYYNGNRVIFNDEIINFTISMRYQSLIPRLVDFFPDIPVNNNIVLHTRDPQNAAVNVTVALPNVQFVDINRNNKFFINFFNLLAKEQRSTAIKVTKSMFWDGIDYEEYKSKTLQDMMFINSTCYVFGLYNHNNTTYCSILSDIISAEKTPIRVCLLPRVVGGKTVTNLISETLKSISSITIREFPRKDKSIMHIGLSETGFMRFFQLLRLMADKPHETAIKEVVMAYVGIKLGDKGSPYYIRKESYQDFIYLLFASMGFKVTTRRSIMGSNNISIISIRPRVTKQYIVTTLMKTSCSKNEAEKLITSAFDLLNFMVSVSDFRDYQSYRQYRNYCPRYFYAGSPEGEETIICDSEPISILDRIDTRGIFSAYTINEMMDTDIFSPENKAFKNNLSRFIESGDITGEDIFCAMPYNILDRIITNAGTCTVSIGDMLDNITTQSDCNMTNEITDMINASLKNTISKDNNMLVSQALDSVANRSKQTIGDLRQSSCKMALLFKNLATSIYTIERIFNAKVCDDVKASMLEKYKAFTDISMSLYKDLIAMENLKAMLYIIRRSGCRIDDAQITTDDLVKSYSLIRPKILSMINYYNEMSRGYFEHMKKNLNMTDGDSVSFDDE.

Positions 615-697 (SPEGEETIIC…ILDRIITNAG (83 aa)) are excised as a propeptide.

Belongs to the orthopxvirus protein OPG136 family. Interacts with P39/A4. The precursor is cleaved by OPG083 to give rise to the 62 kDa mature protein during virion maturation. Proteolytic cleavage of major core proteins OPG136, OPG129, and OPG098, which occurs at a late stage of core formation, is required for production of infectious mature virions (MV).

The protein resides in the virion. Its function is as follows. Core protein 4a is the most abundant virion protein. Major component of the virion core that undergoes proteolytic processing during the immature virion (IV) to mature virion (MV) transition. This chain is Major core protein OPG136 precursor (OPG136), found in Cynomys gunnisoni (Gunnison's prairie dog).